A 1423-amino-acid chain; its full sequence is Serum albumin SDS-1 (1423 aa).

The first 23 residues, 1-23 (MGKAMLKLCITLMVLVFSGTAES), serve as a signal peptide directing secretion. Positions 24–29 (KGVMRR) are excised as a propeptide. 7 Albumin domains span residues 29–230 (REDE…EDFK), 231–426 (HKLT…EFKS), 427–608 (EVEK…SDFK), 609–811 (MDVE…SQAR), 812–1031 (QEAL…HTIH), 1032–1226 (MEIR…AIEK), and 1227–1422 (VIKD…AIKS). Histidine 36 serves as a coordination point for Cu cation. Intrachain disulfides connect cysteine 42–cysteine 88, cysteine 87–cysteine 96, cysteine 109–cysteine 125, cysteine 124–cysteine 135, cysteine 167–cysteine 212, cysteine 211–cysteine 221, cysteine 244–cysteine 290, cysteine 289–cysteine 298, cysteine 311–cysteine 327, cysteine 326–cysteine 337, cysteine 363–cysteine 408, cysteine 407–cysteine 416, cysteine 439–cysteine 485, cysteine 484–cysteine 493, cysteine 506–cysteine 522, and cysteine 521–cysteine 532. The N-linked (GlcNAc...) asparagine glycan is linked to asparagine 490. An N-linked (GlcNAc...) asparagine glycan is attached at asparagine 541. 11 cysteine pairs are disulfide-bonded: cysteine 556–cysteine 601, cysteine 622–cysteine 668, cysteine 667–cysteine 676, cysteine 689–cysteine 705, cysteine 704–cysteine 715, cysteine 747–cysteine 792, cysteine 791–cysteine 802, cysteine 825–cysteine 871, cysteine 870–cysteine 879, cysteine 892–cysteine 907, and cysteine 906–cysteine 947. Asparagine 652 carries N-linked (GlcNAc...) asparagine glycosylation. Asparagine 754 carries an N-linked (GlcNAc...) asparagine glycan. N-linked (GlcNAc...) asparagine glycosylation is found at asparagine 908 and asparagine 911. The segment at 910–936 (SNTSTTTSTTTSTTTSTTTSTTTSTTS) is disordered. 7 consecutive repeat copies span residues 913–916 (STTT), 917–920 (STTT), 921–924 (STTT), 925–928 (STTT), 929–932 (STTT), 933–935 (STT), and 936–939 (STTT). The interval 913-939 (STTTSTTTSTTTSTTTSTTTSTTSTTT) is 7 X 4 AA tandem repeats of S-T-T-T. N-linked (GlcNAc...) asparagine glycosylation is present at asparagine 954. 8 cysteine pairs are disulfide-bonded: cysteine 969–cysteine 1014, cysteine 1013–cysteine 1022, cysteine 1045–cysteine 1091, cysteine 1090–cysteine 1099, cysteine 1112–cysteine 1128, cysteine 1127–cysteine 1138, cysteine 1163–cysteine 1208, and cysteine 1207–cysteine 1216. N-linked (GlcNAc...) asparagine glycosylation is present at asparagine 1070. Residue asparagine 1236 is glycosylated (N-linked (GlcNAc...) asparagine). Disulfide bonds link cysteine 1239–cysteine 1285, cysteine 1284–cysteine 1291, cysteine 1304–cysteine 1320, cysteine 1319–cysteine 1330, cysteine 1359–cysteine 1404, and cysteine 1403–cysteine 1412.

The protein belongs to the ALB/AFP/VDB family. In terms of tissue distribution, plasma.

It localises to the secreted. Its function is as follows. Serum albumin, the main protein of plasma, has a good binding capacity for water, Ca(2+), Na(+), K(+), fatty acids, hormones, bilirubin and drugs. Its main function is the regulation of the colloidal osmotic pressure of blood. This Petromyzon marinus (Sea lamprey) protein is Serum albumin SDS-1 (SDS-1).